The following is a 271-amino-acid chain: Thiazole synthase (271 aa).

K108 acts as the Schiff-base intermediate with DXP in catalysis. 1-deoxy-D-xylulose 5-phosphate contacts are provided by residues G169, A195–G196, and N217–S218.

This sequence belongs to the ThiG family. Homotetramer. Forms heterodimers with either ThiH or ThiS.

It localises to the cytoplasm. It carries out the reaction [ThiS sulfur-carrier protein]-C-terminal-Gly-aminoethanethioate + 2-iminoacetate + 1-deoxy-D-xylulose 5-phosphate = [ThiS sulfur-carrier protein]-C-terminal Gly-Gly + 2-[(2R,5Z)-2-carboxy-4-methylthiazol-5(2H)-ylidene]ethyl phosphate + 2 H2O + H(+). Its pathway is cofactor biosynthesis; thiamine diphosphate biosynthesis. Its function is as follows. Catalyzes the rearrangement of 1-deoxy-D-xylulose 5-phosphate (DXP) to produce the thiazole phosphate moiety of thiamine. Sulfur is provided by the thiocarboxylate moiety of the carrier protein ThiS. In vitro, sulfur can be provided by H(2)S. The protein is Thiazole synthase of Prochlorococcus marinus (strain SARG / CCMP1375 / SS120).